The chain runs to 129 residues: MSNIPTELKYASSHEWIRREEDGSYTVGISEHAQELLGDMVFVELPEVGDSVSAGDDCAVAESVKAASDIYAPVSGEVVAVNEALEDSPELVNSDAYGDGWFFRIMPSDLSELDNLLDAEGYQAVIDEE.

The region spanning 24 to 106 is the Lipoyl-binding domain; that stretch reads SYTVGISEHA…YGDGWFFRIM (83 aa). Lysine 65 carries the post-translational modification N6-lipoyllysine.

It belongs to the GcvH family. As to quaternary structure, the glycine cleavage system is composed of four proteins: P, T, L and H. Requires (R)-lipoate as cofactor.

Its function is as follows. The glycine cleavage system catalyzes the degradation of glycine. The H protein shuttles the methylamine group of glycine from the P protein to the T protein. This chain is Glycine cleavage system H protein, found in Shewanella loihica (strain ATCC BAA-1088 / PV-4).